Consider the following 303-residue polypeptide: UDP-3-O-acyl-N-acetylglucosamine deacetylase (303 aa).

The Zn(2+) site is built by His78, His237, and Asp241. His264 acts as the Proton donor in catalysis.

This sequence belongs to the LpxC family. Zn(2+) serves as cofactor.

The enzyme catalyses a UDP-3-O-[(3R)-3-hydroxyacyl]-N-acetyl-alpha-D-glucosamine + H2O = a UDP-3-O-[(3R)-3-hydroxyacyl]-alpha-D-glucosamine + acetate. It functions in the pathway glycolipid biosynthesis; lipid IV(A) biosynthesis; lipid IV(A) from (3R)-3-hydroxytetradecanoyl-[acyl-carrier-protein] and UDP-N-acetyl-alpha-D-glucosamine: step 2/6. Catalyzes the hydrolysis of UDP-3-O-myristoyl-N-acetylglucosamine to form UDP-3-O-myristoylglucosamine and acetate, the committed step in lipid A biosynthesis. This is UDP-3-O-acyl-N-acetylglucosamine deacetylase from Pseudomonas entomophila (strain L48).